The primary structure comprises 440 residues: NADH-quinone oxidoreductase subunit D 2 (440 aa).

It belongs to the complex I 49 kDa subunit family. As to quaternary structure, NDH-1 is composed of 14 different subunits. Subunits NuoB, C, D, E, F, and G constitute the peripheral sector of the complex.

It localises to the cell membrane. It carries out the reaction a quinone + NADH + 5 H(+)(in) = a quinol + NAD(+) + 4 H(+)(out). Its function is as follows. NDH-1 shuttles electrons from NADH, via FMN and iron-sulfur (Fe-S) centers, to quinones in the respiratory chain. The immediate electron acceptor for the enzyme in this species is believed to be a menaquinone. Couples the redox reaction to proton translocation (for every two electrons transferred, four hydrogen ions are translocated across the cytoplasmic membrane), and thus conserves the redox energy in a proton gradient. This Streptomyces coelicolor (strain ATCC BAA-471 / A3(2) / M145) protein is NADH-quinone oxidoreductase subunit D 2.